Here is a 441-residue protein sequence, read N- to C-terminus: MNPGYSSTASQPGHNPSALPHDVHHALPAIGHPGSYHASMPQLPSIPPSMPPHYSDQYGMMQQPQDQPAPSSTTEGGAETKPSADAVARTQKKLQPHVGEQDGRKYRLDVVQQPKRARMCGFGDKDRRPITPPPCIRLIVTDAVTGKEIDCNEIEHTMYVLNVDLWSEDAQQEVNLVRHTSATPSISSTTPASFAQIDSTPPAFAQIPGTNREMPSYPQSQAYAPSVTPFAQQGGYGQQAISPVGPHYGMVANTYGGQGGYTYASPTDMHPHQLGSQVGPYGPRIFNGAPDMGMHQRMALQGTHQGAPPQGMFTRNLIGSLSASAFRLNDPQEKIGIWFVLQDLSVRTEGIFRLRFSYVNVGAPTRTPNGGPANQTSILNTGKAPILASCFSDAFQVYSAKKFPGVCESTPLSKCFAGQGIKIPIRKAEGGGKNNDDDDDY.

2 stretches are compositionally biased toward polar residues: residues 1–14 (MNPGYSSTASQPGH) and 60–75 (MMQQPQDQPAPSSTTE). Positions 1–104 (MNPGYSSTAS…QPHVGEQDGR (104 aa)) are disordered. The 327-residue stretch at 100–426 (EQDGRKYRLD…AGQGIKIPIR (327 aa)) folds into the Velvet domain.

This sequence belongs to the velvet family. VelB subfamily. In terms of assembly, component of the heterotrimeric velvet complex composed of LAEA, VEA and VELB; VEA acting as a bridging protein between LAEA and VELB. Forms a heterodimeric complex with VOSA; the formation of the VELB-VOSA complex is light-dependent.

It is found in the nucleus. Its subcellular location is the cytoplasm. Its function is as follows. Component of the velvet transcription factor complex that controls sexual/asexual developmental ratio in response to light, promoting sexual development in the darkness while stimulating asexual sporulation under illumination. The velvet complex acts as a global regulator for secondary metabolite gene expression. Component of the VELB-VOSA heterodimeric complex that plays a dual role in activating genes associated with spore maturation and repressing certain development-associated genes. The VELB-VOSA complex binds DNA through the DNA-binding domain of VOSA that recognizes an 11-nucleotide consensus sequence 5'-CTGGCCGCGGC-3' consisting of two motifs in the promoters of key developmental regulatory genes. Involved in the regulation of the response to eactive oxygen species (ROS) stress. This is Velvet complex subunit B from Pyricularia oryzae (strain 70-15 / ATCC MYA-4617 / FGSC 8958) (Rice blast fungus).